We begin with the raw amino-acid sequence, 454 residues long: Cerebellar degeneration-related protein 2 (454 aa).

Coiled-coil stretches lie at residues 44-142 (ELED…SGQG) and 192-265 (EEEN…QSEH). Residues 134-153 (EELKSSGQGRRSPGKCDQEK) are disordered. Serine 311 carries the post-translational modification Phosphoserine. Residues 346-380 (LHEVDTQYSALKVKYEELLKKCQEEQDSLSHKAVQ) are a coiled coil.

Belongs to the CDR2 family.

The polypeptide is Cerebellar degeneration-related protein 2 (CDR2) (Homo sapiens (Human)).